The chain runs to 65 residues: Large ribosomal subunit protein bL35 (65 aa).

The tract at residues 1–22 is disordered; it reads MPKMKTKSSAKKRFKVTGSGKI.

Belongs to the bacterial ribosomal protein bL35 family.

The polypeptide is Large ribosomal subunit protein bL35 (Flavobacterium johnsoniae (strain ATCC 17061 / DSM 2064 / JCM 8514 / BCRC 14874 / CCUG 350202 / NBRC 14942 / NCIMB 11054 / UW101) (Cytophaga johnsonae)).